Reading from the N-terminus, the 84-residue chain is Acyl carrier protein (84 aa).

The Carrier domain maps to 1-75 (MIFQKIQEFI…DILEYIQQHV (75 aa)). Ser35 is modified (O-(pantetheine 4'-phosphoryl)serine).

This sequence belongs to the acyl carrier protein (ACP) family. 4'-phosphopantetheine is transferred from CoA to a specific serine of apo-ACP by AcpS. This modification is essential for activity because fatty acids are bound in thioester linkage to the sulfhydryl of the prosthetic group.

Its subcellular location is the cytoplasm. Its pathway is lipid metabolism; fatty acid biosynthesis. Its function is as follows. Carrier of the growing fatty acid chain in fatty acid biosynthesis. In Phytoplasma mali (strain AT), this protein is Acyl carrier protein.